We begin with the raw amino-acid sequence, 505 residues long: MENKKNKKVILVVIDGLGLRKEKIGNAFELAKTPFFDKMFKEFPWSFIQASGKFVGLPEGQMGNSEVGHLNIGAGQIVYTGLSLINKDLEEKNFINNKAFLEVIEDVKKNNSTLHLMGLVSPGGVHSLEDHLFEIIDVAYQKGLKKVSVHVFGDGRDVAPRSIKSSFEKLEKITNKYNYDIASISGRFYSMDRDKIFERTEKAYEALLGNSNSKFDNWSEFLNKQYSQEISDEFFIPSINASKNVNFVKDGDSIIFFNFRPDRARQLTHLLIGSSLYDFKPKKPVKINKFCSMMKYEGIETLIAFEEMEIKNPIGKVAEKAGLKQLRLAETQKYAHVTYFMDGGVDIEYKNSKRIMVESQKVRSYADHPEMSAKGITDELIKNAKDFDLTILNYANPDMVGHTGVLTSTIKAVEILDYELSRLVDFAQKNNITVFITADHGNAEVTEDDKGNPQTKHTSNPVMLITSDKNLKLKDGKLANISPTILDYLDIEKHEDMNEESLIIK.

Mn(2+) is bound by residues Asp-15 and Ser-65. Ser-65 functions as the Phosphoserine intermediate in the catalytic mechanism. Substrate-binding positions include His-126, 156–157 (RD), Arg-187, Arg-193, 260–263 (RPDR), and Lys-333. Residues Asp-398, His-402, Asp-439, His-440, and His-457 each coordinate Mn(2+).

This sequence belongs to the BPG-independent phosphoglycerate mutase family. As to quaternary structure, monomer. Requires Mn(2+) as cofactor.

It carries out the reaction (2R)-2-phosphoglycerate = (2R)-3-phosphoglycerate. The protein operates within carbohydrate degradation; glycolysis; pyruvate from D-glyceraldehyde 3-phosphate: step 3/5. Catalyzes the interconversion of 2-phosphoglycerate and 3-phosphoglycerate. This is 2,3-bisphosphoglycerate-independent phosphoglycerate mutase from Mycoplasmopsis pulmonis (strain UAB CTIP) (Mycoplasma pulmonis).